Reading from the N-terminus, the 957-residue chain is ERC protein 2 (957 aa).

Positions 1–13 (MYGSARTITNLEG) are enriched in polar residues. The tract at residues 1 to 44 (MYGSARTITNLEGSPSRSPRLPRSPRLGHRRTSSGGGGGTGKTL) is disordered. Residues 14–25 (SPSRSPRLPRSP) show a composition bias toward low complexity. A phosphoserine mark is found at S65 and S666. The stretch at 140 to 917 (RQVRDSTMLD…RMKLMADNYD (778 aa)) forms a coiled coil. Residues 918–957 (DDHHHYHHHHHHHHHRSPGRSQHSNHRPSPDQDDEEGIWA) form a disordered region. The span at 922–943 (HYHHHHHHHHHRSPGRSQHSNH) shows a compositional bias: basic residues. Residues 948–957 (DQDDEEGIWA) are compositionally biased toward acidic residues.

In terms of assembly, interacts with BSN, ERC1, PPFIA1, PPFIA2, PPFIA3 and PPFIA4. Interacts through its C-terminus with the PDZ domain of RIMS1. Part of a complex consisting of ERC2, RIMS1 and UNC13A.

It localises to the cytoplasm. Its subcellular location is the synapse. The protein localises to the presynaptic active zone. The protein resides in the cytoskeleton. Its function is as follows. Thought to be involved in the organization of the cytomatrix at the nerve terminals active zone (CAZ) which regulates neurotransmitter release. Seems to act together with BSN. May recruit liprin-alpha proteins to the CAZ. This is ERC protein 2 (ERC2) from Homo sapiens (Human).